A 275-amino-acid chain; its full sequence is NAD kinase (275 aa).

Asp-66 (proton acceptor) is an active-site residue. Residues 66 to 67 (DG), 138 to 139 (NE), His-168, Asp-170, 181 to 186 (TAYNLS), and Val-205 each bind NAD(+).

The protein belongs to the NAD kinase family. A divalent metal cation is required as a cofactor.

The protein resides in the cytoplasm. It carries out the reaction NAD(+) + ATP = ADP + NADP(+) + H(+). Functionally, involved in the regulation of the intracellular balance of NAD and NADP, and is a key enzyme in the biosynthesis of NADP. Catalyzes specifically the phosphorylation on 2'-hydroxyl of the adenosine moiety of NAD to yield NADP. This chain is NAD kinase, found in Halorubrum lacusprofundi (strain ATCC 49239 / DSM 5036 / JCM 8891 / ACAM 34).